A 729-amino-acid chain; its full sequence is Fatty acid oxidation complex subunit alpha (729 aa).

Residues methionine 1 to lysine 189 form an enoyl-CoA hydratase/isomerase region. Position 296 (aspartate 296) interacts with substrate. The interval glutamate 311–alanine 729 is 3-hydroxyacyl-CoA dehydrogenase. NAD(+) is bound by residues methionine 324, aspartate 343, valine 400–glutamate 402, lysine 407, and serine 429. The active-site For 3-hydroxyacyl-CoA dehydrogenase activity is the histidine 450. Position 453 (asparagine 453) interacts with NAD(+). Substrate contacts are provided by asparagine 500 and tyrosine 660. The tract at residues arginine 708–alanine 729 is disordered.

In the N-terminal section; belongs to the enoyl-CoA hydratase/isomerase family. The protein in the C-terminal section; belongs to the 3-hydroxyacyl-CoA dehydrogenase family. Heterotetramer of two alpha chains (FadB) and two beta chains (FadA).

It catalyses the reaction a (3S)-3-hydroxyacyl-CoA + NAD(+) = a 3-oxoacyl-CoA + NADH + H(+). The enzyme catalyses a (3S)-3-hydroxyacyl-CoA = a (2E)-enoyl-CoA + H2O. The catalysed reaction is a 4-saturated-(3S)-3-hydroxyacyl-CoA = a (3E)-enoyl-CoA + H2O. It carries out the reaction (3S)-3-hydroxybutanoyl-CoA = (3R)-3-hydroxybutanoyl-CoA. It catalyses the reaction a (3Z)-enoyl-CoA = a 4-saturated (2E)-enoyl-CoA. The enzyme catalyses a (3E)-enoyl-CoA = a 4-saturated (2E)-enoyl-CoA. Its pathway is lipid metabolism; fatty acid beta-oxidation. Functionally, involved in the aerobic and anaerobic degradation of long-chain fatty acids via beta-oxidation cycle. Catalyzes the formation of 3-oxoacyl-CoA from enoyl-CoA via L-3-hydroxyacyl-CoA. It can also use D-3-hydroxyacyl-CoA and cis-3-enoyl-CoA as substrate. The chain is Fatty acid oxidation complex subunit alpha from Salmonella schwarzengrund (strain CVM19633).